The primary structure comprises 397 residues: Serpin B10 (397 aa).

Positions 74 to 77 (KKRK) match the Nuclear localization signal motif.

Belongs to the serpin family. Ov-serpin subfamily.

The protein resides in the nucleus. Its subcellular location is the cytoplasm. Functionally, protease inhibitor that may play a role in the regulation of protease activities during hematopoiesis and apoptosis induced by TNF. May regulate protease activities in the cytoplasm and in the nucleus. This chain is Serpin B10 (SERPINB10), found in Sorex araneus (Eurasian common shrew).